The chain runs to 110 residues: Large ribosomal subunit protein uL22 (110 aa).

It belongs to the universal ribosomal protein uL22 family. As to quaternary structure, part of the 50S ribosomal subunit.

Functionally, this protein binds specifically to 23S rRNA; its binding is stimulated by other ribosomal proteins, e.g. L4, L17, and L20. It is important during the early stages of 50S assembly. It makes multiple contacts with different domains of the 23S rRNA in the assembled 50S subunit and ribosome. Its function is as follows. The globular domain of the protein is located near the polypeptide exit tunnel on the outside of the subunit, while an extended beta-hairpin is found that lines the wall of the exit tunnel in the center of the 70S ribosome. The polypeptide is Large ribosomal subunit protein uL22 (Shewanella baltica (strain OS223)).